The primary structure comprises 492 residues: Ketol-acid reductoisomerase (NADP(+)) (492 aa).

Residues 14 to 208 (LDQLGRCRFM…GGHKAGVLES (195 aa)) form the KARI N-terminal Rossmann domain. NADP(+) is bound by residues 45 to 48 (CGAQ), arginine 68, arginine 76, serine 78, and 108 to 110 (DKQ). Histidine 132 is a catalytic residue. Residue glycine 158 coordinates NADP(+). KARI C-terminal knotted domains follow at residues 209–344 (SFVA…NAPK) and 345–485 (YDGK…MTDM). Positions 217, 221, 389, and 393 each coordinate Mg(2+). A substrate-binding site is contributed by serine 414.

This sequence belongs to the ketol-acid reductoisomerase family. It depends on Mg(2+) as a cofactor.

The enzyme catalyses (2R)-2,3-dihydroxy-3-methylbutanoate + NADP(+) = (2S)-2-acetolactate + NADPH + H(+). It carries out the reaction (2R,3R)-2,3-dihydroxy-3-methylpentanoate + NADP(+) = (S)-2-ethyl-2-hydroxy-3-oxobutanoate + NADPH + H(+). It functions in the pathway amino-acid biosynthesis; L-isoleucine biosynthesis; L-isoleucine from 2-oxobutanoate: step 2/4. Its pathway is amino-acid biosynthesis; L-valine biosynthesis; L-valine from pyruvate: step 2/4. Its function is as follows. Involved in the biosynthesis of branched-chain amino acids (BCAA). Catalyzes an alkyl-migration followed by a ketol-acid reduction of (S)-2-acetolactate (S2AL) to yield (R)-2,3-dihydroxy-isovalerate. In the isomerase reaction, S2AL is rearranged via a Mg-dependent methyl migration to produce 3-hydroxy-3-methyl-2-ketobutyrate (HMKB). In the reductase reaction, this 2-ketoacid undergoes a metal-dependent reduction by NADPH to yield (R)-2,3-dihydroxy-isovalerate. This Haemophilus influenzae (strain 86-028NP) protein is Ketol-acid reductoisomerase (NADP(+)).